The chain runs to 196 residues: NADH-quinone oxidoreductase subunit B (196 aa).

[4Fe-4S] cluster contacts are provided by Cys-63, Cys-64, Cys-129, and Cys-159.

It belongs to the complex I 20 kDa subunit family. NDH-1 is composed of 14 different subunits. Subunits NuoB, C, D, E, F, and G constitute the peripheral sector of the complex. [4Fe-4S] cluster is required as a cofactor.

It localises to the cell inner membrane. The catalysed reaction is a quinone + NADH + 5 H(+)(in) = a quinol + NAD(+) + 4 H(+)(out). In terms of biological role, NDH-1 shuttles electrons from NADH, via FMN and iron-sulfur (Fe-S) centers, to quinones in the respiratory chain. The immediate electron acceptor for the enzyme in this species is believed to be a menaquinone. Couples the redox reaction to proton translocation (for every two electrons transferred, four hydrogen ions are translocated across the cytoplasmic membrane), and thus conserves the redox energy in a proton gradient. The protein is NADH-quinone oxidoreductase subunit B of Bacteroides fragilis (strain ATCC 25285 / DSM 2151 / CCUG 4856 / JCM 11019 / LMG 10263 / NCTC 9343 / Onslow / VPI 2553 / EN-2).